A 252-amino-acid polypeptide reads, in one-letter code: uncharacterized protein (252 aa).

Tandem repeats lie at residues 68–82 (TYNQ…DLVD), 83–97 (TYNQ…DLVD), 98–112 (TYNQ…DLVD), 113–127 (TYNQ…DLVD), 128–142 (TYNQ…DLVD), 143–157 (TYNQ…DLVD), 158–172 (TYNQ…DLID), 173–187 (TYNQ…DLVD), 188–202 (TYNQ…DLVD), and 203–217 (TYNQ…DLVD). The segment at 68–246 (TYNQSQNVCP…LIDTYNQSQN (179 aa)) is 13 X 15 AA tandem repeats. One copy of the 11; truncated repeat lies at 218-230 (TYNQSQNVCPQDL). The stretch at 231–239 (NVYTQDLID) is one 12; truncated repeat. A 13; truncated repeat occupies 240-246 (TYNQSQN).

Its function is as follows. A protein probably derived from this gene is found in cuboidal crystalline inclusions, but is not toxic even when coexpressed with upstream ORF1. The protein runs anomalously as a 50 kDa band in gels. This is an uncharacterized protein from Bacillus thuringiensis subsp. kurstaki.